A 134-amino-acid polypeptide reads, in one-letter code: Viral interleukin-8 homolog (134 aa).

The N-terminal stretch at 1 to 22 is a signal peptide; it reads MQALLLVLVLFIVQIYLLPGNG.

It belongs to the intercrine alpha (chemokine CxC) family. Homodimer.

Its subcellular location is the secreted. Plays a role in the early phase of cytolytic infections presumably by recruiting host B or T-lymphocytes. The sequence is that of Viral interleukin-8 homolog (MDV078) from Gallus gallus (Chicken).